Here is a 472-residue protein sequence, read N- to C-terminus: Chitobiosyldiphosphodolichol beta-mannosyltransferase (472 aa).

Residues 1 to 20 (MEEFQFIKYKGFDHVFKYSG) lie on the Lumenal side of the membrane. Residues 21–41 (PWLWWLVGFYLCLPILAYTLL) traverse the membrane as a helical segment. Topologically, residues 42–118 (PYLTMNGTIS…PITVTKNTSN (77 aa)) are cytoplasmic. The helical intramembrane region spans 119–139 (LPFILFAAKKMVVQFFQLLKL). At 140 to 472 (LSDFRGTDYV…MGKRFEYSTD (333 aa)) the chain is on the cytoplasmic side.

It belongs to the glycosyltransferase group 1 family.

The protein resides in the endoplasmic reticulum membrane. The catalysed reaction is an N,N'-diacetylchitobiosyl-diphospho-di-trans,poly-cis-dolichol + GDP-alpha-D-mannose = a beta-D-Man-(1-&gt;4)-beta-D-GlcNAc-(1-&gt;4)-alpha-D-GlcNAc-diphospho-di-trans,poly-cis-dolichol + GDP + H(+). The protein operates within protein modification; protein glycosylation. In terms of biological role, participates in the formation of the lipid-linked precursor oligosaccharide for N-glycosylation. Involved in assembling the dolichol-pyrophosphate-GlcNAc(2)-Man(5) intermediate on the cytoplasmic surface of the ER. This Debaryomyces hansenii (strain ATCC 36239 / CBS 767 / BCRC 21394 / JCM 1990 / NBRC 0083 / IGC 2968) (Yeast) protein is Chitobiosyldiphosphodolichol beta-mannosyltransferase (ALG1).